Consider the following 297-residue polypeptide: HTH-type transcriptional regulator ArgP (297 aa).

Residues 4–60 (PDYRTLQALDAVIRERGFERAAQKLCITQSAVSQRIKQLENLFGQPLLVRTIPPRPT) form the HTH lysR-type domain. The H-T-H motif DNA-binding region spans 21-40 (FERAAQKLCITQSAVSQRIK).

This sequence belongs to the LysR transcriptional regulatory family. As to quaternary structure, homodimer.

Controls the transcription of genes involved in arginine and lysine metabolism. This is HTH-type transcriptional regulator ArgP from Pectobacterium atrosepticum (strain SCRI 1043 / ATCC BAA-672) (Erwinia carotovora subsp. atroseptica).